The following is a 591-amino-acid chain: Aspartate--tRNA ligase (591 aa).

Position 171 (Glu171) interacts with L-aspartate. Positions 195–198 (QLFK) are aspartate. Position 217 (Arg217) interacts with L-aspartate. ATP is bound by residues 217 to 219 (RDE) and Gln226. An L-aspartate-binding site is contributed by His448. Glu482 lines the ATP pocket. Arg489 serves as a coordination point for L-aspartate. Residue 534–537 (GLDR) coordinates ATP.

Belongs to the class-II aminoacyl-tRNA synthetase family. Type 1 subfamily. Homodimer.

Its subcellular location is the cytoplasm. It catalyses the reaction tRNA(Asp) + L-aspartate + ATP = L-aspartyl-tRNA(Asp) + AMP + diphosphate. Its function is as follows. Catalyzes the attachment of L-aspartate to tRNA(Asp) in a two-step reaction: L-aspartate is first activated by ATP to form Asp-AMP and then transferred to the acceptor end of tRNA(Asp). In Aliivibrio fischeri (strain MJ11) (Vibrio fischeri), this protein is Aspartate--tRNA ligase.